Here is a 107-residue protein sequence, read N- to C-terminus: Phycocyanobilin lyase subunit beta (107 aa).

The protein belongs to the CpcE/RpcE/PecE family. As to quaternary structure, cpcE and CpcF associate to form a lyase.

Required for the chromophorylation of the CpcA gene product. This Mastigocladus laminosus (Fischerella sp.) protein is Phycocyanobilin lyase subunit beta (cpcF).